The primary structure comprises 186 residues: Peptidyl-tRNA hydrolase (186 aa).

Y14 is a binding site for tRNA. The Proton acceptor role is filled by H19. Residues Y64, N66, and N112 each contribute to the tRNA site.

Belongs to the PTH family. As to quaternary structure, monomer.

It localises to the cytoplasm. The enzyme catalyses an N-acyl-L-alpha-aminoacyl-tRNA + H2O = an N-acyl-L-amino acid + a tRNA + H(+). Its function is as follows. Hydrolyzes ribosome-free peptidyl-tRNAs (with 1 or more amino acids incorporated), which drop off the ribosome during protein synthesis, or as a result of ribosome stalling. Functionally, catalyzes the release of premature peptidyl moieties from peptidyl-tRNA molecules trapped in stalled 50S ribosomal subunits, and thus maintains levels of free tRNAs and 50S ribosomes. The sequence is that of Peptidyl-tRNA hydrolase from Mesoplasma florum (strain ATCC 33453 / NBRC 100688 / NCTC 11704 / L1) (Acholeplasma florum).